We begin with the raw amino-acid sequence, 265 residues long: Dehydrin COR47 (265 aa).

Over residues 1–14 (MAEEYKNNVPEHET) the composition is skewed to basic and acidic residues. The segment at 1 to 265 (MAEEYKNNVP…EVKKEKESDD (265 aa)) is disordered. Alanine 2 bears the N-acetylalanine mark. The span at 16 to 28 (TVATEESPATTTE) shows a compositional bias: polar residues. Positions 29–47 (VTDRGLFDFLGKKEEEVKP) are enriched in basic and acidic residues. Serine 64 is modified (phosphoserine). The segment covering 69–79 (AAEHEEVKENK) has biased composition (basic and acidic residues). Residue threonine 90 is modified to Phosphothreonine. Composition is skewed to basic and acidic residues over residues 96–105 (NKPSVIEKLH) and 129–156 (IVEG…KTAE). Copy 1 of the repeat occupies 133 to 153 (EEDKKGLVEKIKEKLPGHHDK). Positions 133–251 (EEDKKGLVEK…KEKLPGYHAK (119 aa)) are 3 X 21 AA repeats, Lys-rich. Positions 160 to 172 (PVSTTIPVPVSES) are enriched in low complexity. Basic and acidic residues-rich tracts occupy residues 173 to 204 (VVEH…KAED) and 227 to 265 (PVEH…ESDD). 2 repeat units span residues 180–200 (EEEK…HHDE) and 231–251 (PEEK…YHAK).

This sequence belongs to the plant dehydrin family.

This chain is Dehydrin COR47 (COR47), found in Arabidopsis thaliana (Mouse-ear cress).